We begin with the raw amino-acid sequence, 369 residues long: MKSGRFIGVMSGTSLDGVDVVLATIDEHRVAQLASLSWPIPVSLKQAVLDICQGQQLTLSQFGQLDTQLGRLFADAVNALLKEQNLQARDIVAIGCHGQTVWHEPTGVAPHTLQIGDNNQIVARTGITVVGDFRRRDIALGGHGAPLVPAFHHALLAHPTERRMVLNIGGIANLSLLIPGQPVGGYDTGPGNMLMDAWIWRQAGKPYDKDAEWARAGKVILPLLQNMLSDPYFSQPAPKSTGREYFNYGWLERHLRHFPGVDPRDVQATLAELTAVTISEQVLLSGGCERLMVCGGGGRNPLLMARLAALLPGTEVTTTDAVGISGDDMEALAFAWLAWRTLAGLPGNLPSVTGASQETVLGAIFPANP.

12–19 lines the ATP pocket; sequence GTSLDGVD.

This sequence belongs to the anhydro-N-acetylmuramic acid kinase family.

It carries out the reaction 1,6-anhydro-N-acetyl-beta-muramate + ATP + H2O = N-acetyl-D-muramate 6-phosphate + ADP + H(+). The protein operates within amino-sugar metabolism; 1,6-anhydro-N-acetylmuramate degradation. It functions in the pathway cell wall biogenesis; peptidoglycan recycling. In terms of biological role, catalyzes the specific phosphorylation of 1,6-anhydro-N-acetylmuramic acid (anhMurNAc) with the simultaneous cleavage of the 1,6-anhydro ring, generating MurNAc-6-P. Is required for the utilization of anhMurNAc either imported from the medium or derived from its own cell wall murein, and thus plays a role in cell wall recycling. The protein is Anhydro-N-acetylmuramic acid kinase of Escherichia coli O45:K1 (strain S88 / ExPEC).